The following is a 124-amino-acid chain: Small ribosomal subunit protein uS12 (124 aa).

Aspartate 89 bears the 3-methylthioaspartic acid mark. The tract at residues 104 to 124 (SAGVQNRNRGRSKYGTKRPKK) is disordered. The span at 111–124 (NRGRSKYGTKRPKK) shows a compositional bias: basic residues.

Belongs to the universal ribosomal protein uS12 family. As to quaternary structure, part of the 30S ribosomal subunit. Contacts proteins S8 and S17. May interact with IF1 in the 30S initiation complex.

Its function is as follows. With S4 and S5 plays an important role in translational accuracy. Functionally, interacts with and stabilizes bases of the 16S rRNA that are involved in tRNA selection in the A site and with the mRNA backbone. Located at the interface of the 30S and 50S subunits, it traverses the body of the 30S subunit contacting proteins on the other side and probably holding the rRNA structure together. The combined cluster of proteins S8, S12 and S17 appears to hold together the shoulder and platform of the 30S subunit. This chain is Small ribosomal subunit protein uS12, found in Desulforamulus reducens (strain ATCC BAA-1160 / DSM 100696 / MI-1) (Desulfotomaculum reducens).